Here is a 224-residue protein sequence, read N- to C-terminus: Ribosomal RNA small subunit methyltransferase G (224 aa).

Residues Gly89, Phe94, 140–141 (AE), and Arg153 contribute to the S-adenosyl-L-methionine site.

Belongs to the methyltransferase superfamily. RNA methyltransferase RsmG family.

It localises to the cytoplasm. Specifically methylates the N7 position of a guanine in 16S rRNA. In Bacteroides fragilis (strain YCH46), this protein is Ribosomal RNA small subunit methyltransferase G.